Reading from the N-terminus, the 192-residue chain is FAD-linked sulfhydryl oxidase erv2 (192 aa).

The Cytoplasmic segment spans residues 1 to 8 (MILNRRIQ). Residues 9 to 29 (VILPTLLILSFIIWIFHSVMV) form a helical; Signal-anchor membrane-spanning segment. The Lumenal segment spans residues 30 to 192 (DKDWRLFMPE…VINEDHDYSG (163 aa)). Residues 61 to 162 (HDNNTNNLMV…TSCDGFNERY (102 aa)) enclose the ERV/ALR sulfhydryl oxidase domain. Trp-74, Cys-138, His-141, Asn-145, and Tyr-162 together coordinate FAD. An intrachain disulfide couples Cys-138 to Cys-155.

The cofactor is FAD.

The protein localises to the endoplasmic reticulum membrane. It localises to the cytoplasm. The protein resides in the nucleus. The catalysed reaction is 2 R'C(R)SH + O2 = R'C(R)S-S(R)CR' + H2O2. Its function is as follows. FAD-dependent sulfhydryl oxidase that catalyzes disulfide bond formation in the endoplasmic reticulum lumen. This chain is FAD-linked sulfhydryl oxidase erv2 (erv2), found in Schizosaccharomyces pombe (strain 972 / ATCC 24843) (Fission yeast).